Consider the following 391-residue polypeptide: tRNA-specific 2-thiouridylase MnmA (391 aa).

ATP-binding positions include 9 to 16 and Met-35; that span reads GMSGGVDS. The interaction with target base in tRNA stretch occupies residues 95–97; that stretch reads NPD. Cys-100 acts as the Nucleophile in catalysis. A disulfide bridge connects residues Cys-100 and Cys-196. Gly-124 provides a ligand contact to ATP. The interaction with tRNA stretch occupies residues 146 to 148; it reads KDQ. Residue Cys-196 is the Cysteine persulfide intermediate of the active site. Positions 308-309 are interaction with tRNA; the sequence is RY. Over residues 372-382 the composition is skewed to polar residues; it reads TGQPGQATSTG. The disordered stretch occupies residues 372 to 391; that stretch reads TGQPGQATSTGHAPALAEAR.

The protein belongs to the MnmA/TRMU family.

It localises to the cytoplasm. The enzyme catalyses S-sulfanyl-L-cysteinyl-[protein] + uridine(34) in tRNA + AH2 + ATP = 2-thiouridine(34) in tRNA + L-cysteinyl-[protein] + A + AMP + diphosphate + H(+). Catalyzes the 2-thiolation of uridine at the wobble position (U34) of tRNA, leading to the formation of s(2)U34. In Burkholderia cenocepacia (strain ATCC BAA-245 / DSM 16553 / LMG 16656 / NCTC 13227 / J2315 / CF5610) (Burkholderia cepacia (strain J2315)), this protein is tRNA-specific 2-thiouridylase MnmA.